Consider the following 537-residue polypeptide: Putative cysteine ligase BshC (537 aa).

The stretch at 415–439 (EKASNNFINEVEEMKIQQQELYNNL) forms a coiled coil.

The protein belongs to the BshC family.

In terms of biological role, involved in bacillithiol (BSH) biosynthesis. May catalyze the last step of the pathway, the addition of cysteine to glucosamine malate (GlcN-Mal) to generate BSH. In Staphylococcus epidermidis (strain ATCC 12228 / FDA PCI 1200), this protein is Putative cysteine ligase BshC.